A 621-amino-acid chain; its full sequence is Transmembrane protein 200C (621 aa).

The interval 12-37 (ARKQDPLRPPSQIPKRKRKAKKRRKN) is disordered. The segment covering 25–36 (PKRKRKAKKRRK) has biased composition (basic residues). A helical membrane pass occupies residues 53–73 (GLIALCGILVLLVGIAMAVVG). Positions 80-147 (GTNREGGKQL…RAASPSSSST (68 aa)) are disordered. A compositionally biased stretch (low complexity) spans 125 to 147 (SSSAGAPRSTPPARAASPSSSST). The chain crosses the membrane as a helical span at residues 167-187 (VFGPLIMGIGIFLFICANAVL). 3 disordered regions span residues 284-315 (WPPHPAAPSGGRPRGAASPPDLASSPRCPREP), 347-368 (ASSCSSPAPCSPPESWGRQSTA), and 384-598 (LQGG…FTNK). Residues 290–303 (APSGGRPRGAASPP) are compositionally biased toward low complexity. A compositionally biased stretch (basic and acidic residues) spans 405 to 418 (PGERGSQEIPRGEL). Pro residues predominate over residues 479–490 (RAPPSPEPPPSP). Low complexity-rich tracts occupy residues 491–505 (GSADPDSSPLAKAAS) and 523–533 (GSSQSDDPSSS). The span at 586–595 (EQPQPVQRQF) shows a compositional bias: polar residues.

Belongs to the TMEM200 family.

It localises to the membrane. The chain is Transmembrane protein 200C (TMEM200C) from Homo sapiens (Human).